We begin with the raw amino-acid sequence, 329 residues long: POU domain, class 5, transcription factor 2 (329 aa).

Residues 1 to 14 (MAGRRSSNVFPLSG) are compositionally biased toward polar residues. The segment at 1–24 (MAGRRSSNVFPLSGNSGGGLEVDT) is disordered. Residues 107-181 (DVSAIQKEME…LLKMWLEEVD (75 aa)) enclose the POU-specific domain. Residues 199-258 (RKRRRASRERRIGSNLEKLFLQCPEPTPQQISYIAGRLRLQKDLVQVWFSNRSQMGSWPT) constitute a DNA-binding region (homeobox).

It belongs to the POU transcription factor family. Class-5 subfamily. In terms of tissue distribution, in adult brain, expressed in the olfactory bulb, becoming specifically concentrated in the mitral cell layer. Also found in the pyramidal cell layer of the hippocampus, in the granule cell layer of the cerebellum and in the cortex.

The protein localises to the nucleus. Transcription factor that binds preferentially to the octamer motif (5'-ATGTTAAT-3'). May exert a regulatory function in meiotic events that are required for terminal differentiation of male germ cell. The chain is POU domain, class 5, transcription factor 2 (Pou5f2) from Mus musculus (Mouse).